The sequence spans 202 residues: MPEETQVHVVRHGEVHNPTGILYGRLPGFHLSATGAAQAAAVADALADRDIVAVIASPLQRAQETAAPIAARHDLAVETDPDLIESANFFXGRRVGPGDGAWRDPRVWWQLRNPFTPSWGEPYVDIAARMTTAVDKARVRGAGHEVVCVSHQLPVWTLRLYLTGKRLWHDPRRRDCALASVTSLIYDGDRLVDVVYSQPAAL.

Lys136 is covalently cross-linked (Isoglutamyl lysine isopeptide (Lys-Gln) (interchain with Q-Cter in protein Pup)).

This is an uncharacterized protein from Mycobacterium tuberculosis (strain CDC 1551 / Oshkosh).